A 554-amino-acid polypeptide reads, in one-letter code: 5'-AMP-activated protein kinase catalytic subunit alpha-1 (554 aa).

Positions 22–274 constitute a Protein kinase domain; that stretch reads YILGDTLGVG…IKDIREHEWF (253 aa). T27 is modified (phosphothreonine). ATP is bound by residues 28–36 and K51; that span reads LGVGTFGKV. D145 (proton acceptor) is an active-site residue. T178 carries the phosphothreonine; by LKB1 and CaMKK2 modification. Phosphothreonine occurs at positions 264 and 350. Residues 297–376 form an AIS region; the sequence is EALKEVCEKF…PERVPFLVAE (80 aa). Position 351 is a phosphoserine (S351). A Phosphoserine; by ULK1 modification is found at S355. Position 363 is a phosphothreonine; by ULK1 (T363). At T377 the chain carries Phosphothreonine. A Phosphoserine; by ULK1 modification is found at S392. S462 carries the post-translational modification Phosphoserine. The span at 480 to 500 shows a compositional bias: polar residues; it reads KSGTATPQRSGSVSNYRSCQR. The tract at residues 480 to 531 is disordered; sequence KSGTATPQRSGSVSNYRSCQRSDSDAEAQGKSSEVSLTSSVTSLDSSPVDLT. S481 is subject to Phosphoserine; by ULK1. T483 carries the phosphothreonine; by ULK1 modification. T485 carries the phosphothreonine modification. S491, S503, S519, and S522 each carry phosphoserine. Low complexity predominate over residues 511-530; sequence SSEVSLTSSVTSLDSSPVDL.

The protein belongs to the protein kinase superfamily. CAMK Ser/Thr protein kinase family. SNF1 subfamily. As to quaternary structure, AMPK is a heterotrimer of an alpha catalytic subunit (PRKAA1 or PRKAA2), a beta (PRKAB1 or PRKAB2) and a gamma non-catalytic subunits (PRKAG1, PRKAG2 or PRKAG3). Interacts with FNIP1 and FNIP2. It depends on Mg(2+) as a cofactor. Post-translationally, ubiquitinated. In terms of processing, phosphorylated at Thr-183 by STK11/LKB1 in complex with STE20-related adapter-alpha (STRADA) pseudo kinase and CAB39. Also phosphorylated at Thr-183 by CAMKK2; triggered by a rise in intracellular calcium ions, without detectable changes in the AMP/ATP ratio. CAMKK1 can also phosphorylate Thr-183, but at a much lower level. Dephosphorylated by protein phosphatase 2A and 2C (PP2A and PP2C). Phosphorylated by ULK1 and ULK2; leading to negatively regulate AMPK activity and suggesting the existence of a regulatory feedback loop between ULK1, ULK2 and AMPK. Dephosphorylated by PPM1A and PPM1B. Glycosylated; O-GlcNAcylated by OGT, promoting the AMP-activated protein kinase (AMPK) activity.

It localises to the cytoplasm. The protein localises to the nucleus. It catalyses the reaction L-seryl-[protein] + ATP = O-phospho-L-seryl-[protein] + ADP + H(+). The catalysed reaction is L-threonyl-[protein] + ATP = O-phospho-L-threonyl-[protein] + ADP + H(+). It carries out the reaction L-seryl-[acetyl-CoA carboxylase] + ATP = O-phospho-L-seryl-[acetyl-CoA carboxylase] + ADP + H(+). The enzyme catalyses L-seryl-[3-hydroxy-3-methylglutaryl-coenzyme A reductase] + ATP = O-phospho-L-seryl-[3-hydroxy-3-methylglutaryl-coenzyme A reductase] + ADP + H(+). It catalyses the reaction L-seryl-[tau protein] + ATP = O-phospho-L-seryl-[tau protein] + ADP + H(+). The catalysed reaction is L-threonyl-[tau protein] + ATP = O-phospho-L-threonyl-[tau protein] + ADP + H(+). With respect to regulation, activated by phosphorylation on Thr-183. Binding of AMP to non-catalytic gamma subunit (PRKAG1, PRKAG2 or PRKAG3) results in allosteric activation, inducing phosphorylation on Thr-183. AMP-binding to gamma subunit also sustains activity by preventing dephosphorylation of Thr-183. ADP also stimulates Thr-183 phosphorylation, without stimulating already phosphorylated AMPK. ATP promotes dephosphorylation of Thr-183, rendering the enzyme inactive. Under physiological conditions AMPK mainly exists in its inactive form in complex with ATP, which is much more abundant than AMP. Selectively inhibited by compound C (6-[4-(2-Piperidin-1-yl-ethoxy)-phenyl)]-3-pyridin-4-yl-pyyrazolo[1,5-a] pyrimidine. Activated by resveratrol, a natural polyphenol present in red wine, and S17834, a synthetic polyphenol. In terms of biological role, catalytic subunit of AMP-activated protein kinase (AMPK), an energy sensor protein kinase that plays a key role in regulating cellular energy metabolism. In response to reduction of intracellular ATP levels, AMPK activates energy-producing pathways and inhibits energy-consuming processes: inhibits protein, carbohydrate and lipid biosynthesis, as well as cell growth and proliferation. AMPK acts via direct phosphorylation of metabolic enzymes, and by longer-term effects via phosphorylation of transcription regulators. Regulates lipid synthesis by phosphorylating and inactivating lipid metabolic enzymes such as ACACA, ACACB, GYS1, HMGCR and LIPE; regulates fatty acid and cholesterol synthesis by phosphorylating acetyl-CoA carboxylase (ACACA and ACACB) and hormone-sensitive lipase (LIPE) enzymes, respectively. Promotes lipolysis of lipid droplets by mediating phosphorylation of isoform 1 of CHKA (CHKalpha2). Regulates insulin-signaling and glycolysis by phosphorylating IRS1, PFKFB2 and PFKFB3. AMPK stimulates glucose uptake in muscle by increasing the translocation of the glucose transporter SLC2A4/GLUT4 to the plasma membrane, possibly by mediating phosphorylation of TBC1D4/AS160. Regulates transcription and chromatin structure by phosphorylating transcription regulators involved in energy metabolism such as CRTC2/TORC2, FOXO3, histone H2B, HDAC5, MEF2C, MLXIPL/ChREBP, EP300, HNF4A, p53/TP53, SREBF1, SREBF2 and PPARGC1A. Acts as a key regulator of glucose homeostasis in liver by phosphorylating CRTC2/TORC2, leading to CRTC2/TORC2 sequestration in the cytoplasm. In response to stress, phosphorylates 'Ser-36' of histone H2B (H2BS36ph), leading to promote transcription. Acts as a key regulator of cell growth and proliferation by phosphorylating FNIP1, TSC2, RPTOR, WDR24 and ATG1/ULK1: in response to nutrient limitation, negatively regulates the mTORC1 complex by phosphorylating RPTOR component of the mTORC1 complex and by phosphorylating and activating TSC2. Also phosphorylates and inhibits GATOR2 subunit WDR24 in response to nutrient limitation, leading to suppress glucose-mediated mTORC1 activation. In response to energetic stress, phosphorylates FNIP1, inactivating the non-canonical mTORC1 signaling, thereby promoting nuclear translocation of TFEB and TFE3, and inducing transcription of lysosomal or autophagy genes. In response to nutrient limitation, promotes autophagy by phosphorylating and activating ATG1/ULK1. In that process also activates WDR45/WIPI4. Phosphorylates CASP6, thereby preventing its autoprocessing and subsequent activation. In response to nutrient limitation, phosphorylates transcription factor FOXO3 promoting FOXO3 mitochondrial import. Also acts as a regulator of cellular polarity by remodeling the actin cytoskeleton; probably by indirectly activating myosin. AMPK also acts as a regulator of circadian rhythm by mediating phosphorylation of CRY1, leading to destabilize it. May regulate the Wnt signaling pathway by phosphorylating CTNNB1, leading to stabilize it. Also has tau-protein kinase activity: in response to amyloid beta A4 protein (APP) exposure, activated by CAMKK2, leading to phosphorylation of MAPT/TAU; however the relevance of such data remains unclear in vivo. Also phosphorylates CFTR, EEF2K, KLC1, NOS3 and SLC12A1. Regulates hepatic lipogenesis. Activated via SIRT3, represses sterol regulatory element-binding protein (SREBP) transcriptional activities and ATP-consuming lipogenesis to restore cellular energy balance. Upon stress, regulates mitochondrial fragmentation through phosphorylation of MTFR1L. The protein is 5'-AMP-activated protein kinase catalytic subunit alpha-1 (PRKAA1) of Pongo abelii (Sumatran orangutan).